Reading from the N-terminus, the 154-residue chain is 6,7-dimethyl-8-ribityllumazine synthase (154 aa).

Residues Phe-26, 60–62, and 84–86 each bind 5-amino-6-(D-ribitylamino)uracil; these read ALE and CII. Residue 89-90 participates in (2S)-2-hydroxy-3-oxobutyl phosphate binding; that stretch reads ET. His-92 (proton donor) is an active-site residue. Asn-117 serves as a coordination point for 5-amino-6-(D-ribitylamino)uracil. Arg-131 lines the (2S)-2-hydroxy-3-oxobutyl phosphate pocket.

It belongs to the DMRL synthase family.

It carries out the reaction (2S)-2-hydroxy-3-oxobutyl phosphate + 5-amino-6-(D-ribitylamino)uracil = 6,7-dimethyl-8-(1-D-ribityl)lumazine + phosphate + 2 H2O + H(+). It functions in the pathway cofactor biosynthesis; riboflavin biosynthesis; riboflavin from 2-hydroxy-3-oxobutyl phosphate and 5-amino-6-(D-ribitylamino)uracil: step 1/2. Functionally, catalyzes the formation of 6,7-dimethyl-8-ribityllumazine by condensation of 5-amino-6-(D-ribitylamino)uracil with 3,4-dihydroxy-2-butanone 4-phosphate. This is the penultimate step in the biosynthesis of riboflavin. The chain is 6,7-dimethyl-8-ribityllumazine synthase from Paracidovorax citrulli (strain AAC00-1) (Acidovorax citrulli).